The sequence spans 180 residues: Non-specific lipid transfer protein GPI-anchored 3 (180 aa).

The signal sequence occupies residues 1–22 (MEAVRFAVAVVLVFCYVTSSNA). Disulfide bonds link Cys-41–Cys-78, Cys-48–Cys-62, Cys-63–Cys-104, and Cys-76–Cys-113. 2 N-linked (GlcNAc...) asparagine glycosylation sites follow: Asn-91 and Asn-120. 2 stretches are compositionally biased toward low complexity: residues 116–125 (SAGTNSSSTP) and 133–156 (PASS…TAKP). A disordered region spans residues 116–156 (SAGTNSSSTPPATPKTPPASSTSTGTGSGSTGNAAPSTAKP). Ser-158 carries GPI-anchor amidated serine lipidation. Positions 159–180 (SAPAINFGGLSFASAVVATLFF) are cleaved as a propeptide — removed in mature form.

Belongs to the plant LTP family. As to expression, restricted to stamen, pollen and sporophytic tissues. Also detected, at low levels, in stems and leaves.

The protein localises to the cell membrane. Functionally, lipid transfer protein involved in seed and ovule maturation and development, probably by regulating the fatty acids homeostasis during suberin and sporopollenin biosynthesis or deposition. This is Non-specific lipid transfer protein GPI-anchored 3 from Arabidopsis thaliana (Mouse-ear cress).